We begin with the raw amino-acid sequence, 495 residues long: Ectonucleoside triphosphate diphosphohydrolase 2 (495 aa).

Residues 1 to 4 (MAGK) lie on the Cytoplasmic side of the membrane. Residues 5–25 (LVSLVPPLLLAAAGLTGLLLL) traverse the membrane as a helical segment. The Extracellular portion of the chain corresponds to 26-462 (CVPTQDVREP…PGLRKGTHFS (437 aa)). An N-linked (GlcNAc...) asparagine glycan is attached at Asn64. A disulfide bond links Cys75 and Cys99. Asn129 is a glycosylation site (N-linked (GlcNAc...) asparagine). Glu165 serves as the catalytic Proton acceptor. Residue 204–208 (GASTQ) participates in ATP binding. 2 disulfides stabilise this stretch: Cys242-Cys284 and Cys265-Cys310. N-linked (GlcNAc...) asparagine glycosylation is found at Asn294, Asn306, and Asn319. 2 disulfides stabilise this stretch: Cys323–Cys328 and Cys377–Cys399. N-linked (GlcNAc...) asparagine glycosylation is found at Asn378 and Asn443. A helical membrane pass occupies residues 463 to 483 (SWVALLLLFTVLILAALVLLL). Topologically, residues 484–495 (RQVRSAKSPGAL) are cytoplasmic.

It belongs to the GDA1/CD39 NTPase family. Requires Ca(2+) as cofactor. The cofactor is Mg(2+). In terms of tissue distribution, expressed in brain, heart, vas deferens, kidney, skeletal muscle, thymus, lung and spleen. Weak expression in liver.

The protein localises to the cell membrane. In the nervous system, could hydrolyze ATP and other nucleotides to regulate purinergic neurotransmission. Hydrolyzes ADP only to a marginal extent. The sequence is that of Ectonucleoside triphosphate diphosphohydrolase 2 (Entpd2) from Rattus norvegicus (Rat).